A 577-amino-acid chain; its full sequence is Sulfite reductase [NADPH] hemoprotein beta-component (577 aa).

[4Fe-4S] cluster-binding residues include C436, C442, C481, and C485. Siroheme is bound at residue C485.

It belongs to the nitrite and sulfite reductase 4Fe-4S domain family. As to quaternary structure, alpha(8)-beta(8). The alpha component is a flavoprotein, the beta component is a hemoprotein. The cofactor is siroheme. [4Fe-4S] cluster serves as cofactor.

The enzyme catalyses hydrogen sulfide + 3 NADP(+) + 3 H2O = sulfite + 3 NADPH + 4 H(+). Its pathway is sulfur metabolism; hydrogen sulfide biosynthesis; hydrogen sulfide from sulfite (NADPH route): step 1/1. In terms of biological role, component of the sulfite reductase complex that catalyzes the 6-electron reduction of sulfite to sulfide. This is one of several activities required for the biosynthesis of L-cysteine from sulfate. This chain is Sulfite reductase [NADPH] hemoprotein beta-component, found in Shewanella woodyi (strain ATCC 51908 / MS32).